Here is a 74-residue protein sequence, read N- to C-terminus: Serine rich endogenous peptide 16 (74 aa).

An N-terminal signal peptide occupies residues 1-31; sequence MATKISHLVSLLLSLLLLLLFISSQVGFTEA. The tract at residues 29–74 is disordered; that stretch reads TEAKRDERKKMSSPPIPSPLIPSPPIPPPPPRFYVPPSKSRRGKGP. The span at 42–62 shows a compositional bias: pro residues; sequence PPIPSPLIPSPPIPPPPPRFY. An SCOOP motif motif is present at residues 60 to 74; sequence RFYVPPSKSRRGKGP. The short motif at 66 to 68 is the SxS motif essential for MIK2 binding element; sequence SKS.

The protein belongs to the serine rich endogenous peptide (SCOOP) phytocytokine family. Interacts with MIK2 (via extracellular leucine-rich repeat domain); this interaction triggers the formation of complex between MIK2 and the BAK1/SERK3 and SERK4 coreceptors, and subsequent BAK1 activation by phosphorylation.

The protein resides in the cell membrane. It is found in the secreted. It localises to the extracellular space. The protein localises to the apoplast. Brassicaceae-specific phytocytokine (plant endogenous peptide released into the apoplast) perceived by MIK2 in a BAK1/SERK3 and SERK4 coreceptors-dependent manner, that modulates various physiological and antimicrobial processes including growth prevention and reactive oxygen species (ROS) response regulation. The polypeptide is Serine rich endogenous peptide 16 (Arabidopsis thaliana (Mouse-ear cress)).